A 331-amino-acid chain; its full sequence is Cytosolic sulfotransferase 8 (331 aa).

Positions 1–11 are enriched in basic and acidic residues; it reads MGEKDIPRNLK. The segment at 1–31 is disordered; the sequence is MGEKDIPRNLKEEEEEEEENQSEETKSLISS. Positions 12 to 22 are enriched in acidic residues; sequence EEEEEEEENQS. 80-85 is a 3'-phosphoadenylyl sulfate binding site; the sequence is KSGTTW. His-145 serves as the catalytic Proton acceptor. Residues Arg-167, Ser-175, Tyr-231, and 297–299 contribute to the 3'-phosphoadenylyl sulfate site; that span reads RKG.

It belongs to the sulfotransferase 1 family. Expressed in seedlings and roots.

Its subcellular location is the cytoplasm. Functionally, sulfotransferase that utilizes 3'-phospho-5'-adenylyl sulfate (PAPS) as sulfonate donor. No activity with brassinosteroids. In Arabidopsis thaliana (Mouse-ear cress), this protein is Cytosolic sulfotransferase 8 (SOT8).